A 331-amino-acid polypeptide reads, in one-letter code: Syntaxin-43 (331 aa).

Over 1-305 the chain is Cytoplasmic; it reads MATRNRTLLF…KAERTQRQGG (305 aa). Disordered stretches follow at residues 20-45 and 59-80; these read VRAP…KSGL and PNRS…GTIT. Residues 31-40 are compositionally biased toward polar residues; it reads TLTEHNSLTG. The stretch at 124–154 forms a coiled coil; sequence KEDQHQIETLTQEVTFLLKKSEKQLQRLSAA. The region spanning 235–297 is the t-SNARE coiled-coil homology domain; that stretch reads EEISIEREKE…DDGLKQLQKA (63 aa). A helical; Anchor for type IV membrane protein transmembrane segment spans residues 306-326; sequence MVMCASVLVILCFIMLVLLIL. Topologically, residues 327–331 are vesicular; sequence KEILL.

This sequence belongs to the syntaxin family. In terms of assembly, part of the t-SNARE complex. Expressed at low levels in roots, stems, flowers and leaves.

It localises to the golgi apparatus. The protein resides in the trans-Golgi network membrane. Its function is as follows. Contributes to the regulation of secretory and vacuolar transport pathways in the post-Golgi network, and to the maintenance of the Golgi apparatus and trans-Golgi network (TGN) morphologies. Vesicle trafficking protein that functions in the secretory pathway and mediates liposome fusion. Required for extracellular resistance responses to a fungal pathogen. Also involved in the protection of chloroplasts from salicylic acid-dependent biotic stress. This Arabidopsis thaliana (Mouse-ear cress) protein is Syntaxin-43.